A 393-amino-acid polypeptide reads, in one-letter code: MSPRPEKRRVSIFGATGSIGQNTIDLIARAPEAYDVVALTGARNIAQLAADARRLSASIAVTAEEELLPDLRAALEGSGVEAAAGEAALLEAADRPADWIMSAIVGAAGLAPGFRALRHGTTLALANKESLVTAGPLLLAEAATHGATILPVDSEHSAVFQALVGEDIAAVERIIITASGGGLRDWPEDDLARATPADAGAHPNWDMGQRITIDSASMFNKAMELIETKEFFGVSPARIEAVVHPQSLIHALVGFTDGALMAHLGPPDMRHAIGYALNYPDRAHLPVDRLDLAQIARLEFHAPSDTRYPALKIAREVMQTGGQSGCIFNAAKEIALDGFLAGKIGFMDMSGIVSDTLDAMSSKNSLSNAPETLEDVLQTDQMARNIASARLAR.

NADPH contacts are provided by T16, G17, S18, I19, A42, R43, N44, and N127. K128 is a 1-deoxy-D-xylulose 5-phosphate binding site. NADPH is bound at residue E129. D153 provides a ligand contact to Mn(2+). S154, E155, S179, and H202 together coordinate 1-deoxy-D-xylulose 5-phosphate. Residue E155 participates in Mn(2+) binding. G208 is an NADPH binding site. Positions 215, 220, 221, and 224 each coordinate 1-deoxy-D-xylulose 5-phosphate. Mn(2+) is bound at residue E224.

The protein belongs to the DXR family. Mg(2+) serves as cofactor. Requires Mn(2+) as cofactor.

It carries out the reaction 2-C-methyl-D-erythritol 4-phosphate + NADP(+) = 1-deoxy-D-xylulose 5-phosphate + NADPH + H(+). Its pathway is isoprenoid biosynthesis; isopentenyl diphosphate biosynthesis via DXP pathway; isopentenyl diphosphate from 1-deoxy-D-xylulose 5-phosphate: step 1/6. Its function is as follows. Catalyzes the NADPH-dependent rearrangement and reduction of 1-deoxy-D-xylulose-5-phosphate (DXP) to 2-C-methyl-D-erythritol 4-phosphate (MEP). The polypeptide is 1-deoxy-D-xylulose 5-phosphate reductoisomerase (Jannaschia sp. (strain CCS1)).